The sequence spans 129 residues: Small ribosomal subunit protein bS18c (129 aa).

A disordered region spans residues 1–20; it reads MGTSNTQKPQKQVPKRKKYK.

This sequence belongs to the bacterial ribosomal protein bS18 family. As to quaternary structure, part of the 30S ribosomal subunit.

The protein localises to the plastid. It localises to the chloroplast. In Stigeoclonium helveticum (Green alga), this protein is Small ribosomal subunit protein bS18c.